The following is a 295-amino-acid chain: MMLIDGKKVSTDLKNELKTRVEELKAKAGCVPGLTVIIVGEDPASQVYVRNKAKSCKETGMNSTVIELPAETTQEELLGKIEALNQDPDVHGILVQQPLPSHIEEYAVTMAIDPAKDVDGFHPENVGQMVLGNLDKCFISCTPFGILELLRRYDIETRGKHCVVVGRSNIVGKPMANLMLQKLRETNCTVTVCHSATQNMPELTRQADILIAAIGRANFITREMVKPGAVVIDVGINRIEDPSRKSGFRLAGDVDFDNVAEMASAITPVPGGVGPMTIAMLLKNTLQSFARSHNL.

NADP(+) is bound by residues 166 to 168 (GRS), Ser195, and Ile236.

Belongs to the tetrahydrofolate dehydrogenase/cyclohydrolase family. As to quaternary structure, homodimer.

The enzyme catalyses (6R)-5,10-methylene-5,6,7,8-tetrahydrofolate + NADP(+) = (6R)-5,10-methenyltetrahydrofolate + NADPH. It catalyses the reaction (6R)-5,10-methenyltetrahydrofolate + H2O = (6R)-10-formyltetrahydrofolate + H(+). Its pathway is one-carbon metabolism; tetrahydrofolate interconversion. Functionally, catalyzes the oxidation of 5,10-methylenetetrahydrofolate to 5,10-methenyltetrahydrofolate and then the hydrolysis of 5,10-methenyltetrahydrofolate to 10-formyltetrahydrofolate. In Prosthecochloris aestuarii (strain DSM 271 / SK 413), this protein is Bifunctional protein FolD.